The following is an 89-amino-acid chain: MAKKAKVQKELKRQELVAQYAEKRKELKEKGDYVALAKLPRDSAPSRLTRRCRKTGRPRGVLRDFELSRIAFRELAHKGQIPGVKKASW.

The protein belongs to the universal ribosomal protein uS14 family. In terms of assembly, part of the 30S ribosomal subunit. Contacts proteins S3 and S10.

Its function is as follows. Binds 16S rRNA, required for the assembly of 30S particles and may also be responsible for determining the conformation of the 16S rRNA at the A site. In Shouchella clausii (strain KSM-K16) (Alkalihalobacillus clausii), this protein is Small ribosomal subunit protein uS14.